The chain runs to 611 residues: Dihydroxy-acid dehydratase (611 aa).

Position 81 (D81) interacts with Mg(2+). [2Fe-2S] cluster is bound at residue C122. Residues D123 and K124 each coordinate Mg(2+). The residue at position 124 (K124) is an N6-carboxylysine. C195 is a binding site for [2Fe-2S] cluster. A Mg(2+)-binding site is contributed by E491. The active-site Proton acceptor is the S517.

The protein belongs to the IlvD/Edd family. Homodimer. [2Fe-2S] cluster serves as cofactor. It depends on Mg(2+) as a cofactor.

It catalyses the reaction (2R)-2,3-dihydroxy-3-methylbutanoate = 3-methyl-2-oxobutanoate + H2O. It carries out the reaction (2R,3R)-2,3-dihydroxy-3-methylpentanoate = (S)-3-methyl-2-oxopentanoate + H2O. Its pathway is amino-acid biosynthesis; L-isoleucine biosynthesis; L-isoleucine from 2-oxobutanoate: step 3/4. It functions in the pathway amino-acid biosynthesis; L-valine biosynthesis; L-valine from pyruvate: step 3/4. Its function is as follows. Functions in the biosynthesis of branched-chain amino acids. Catalyzes the dehydration of (2R,3R)-2,3-dihydroxy-3-methylpentanoate (2,3-dihydroxy-3-methylvalerate) into 2-oxo-3-methylpentanoate (2-oxo-3-methylvalerate) and of (2R)-2,3-dihydroxy-3-methylbutanoate (2,3-dihydroxyisovalerate) into 2-oxo-3-methylbutanoate (2-oxoisovalerate), the penultimate precursor to L-isoleucine and L-valine, respectively. The sequence is that of Dihydroxy-acid dehydratase from Brucella canis (strain ATCC 23365 / NCTC 10854 / RM-666).